Here is a 123-residue protein sequence, read N- to C-terminus: Intracellular iron chaperone frataxin (123 aa).

Homodimer, upon Fe(2+) binding. Interacts with the SufS/SufU complex. Interacts with CpfC. Requires Fe(2+) as cofactor.

It is found in the cytoplasm. In terms of biological role, plays an essential role in iron intracellular trafficking to iron cofactor biogenesis systems including iron-sulfur cluster (Fe-S) or heme assembly. Promotes the biosynthesis of iron-sulfur clusters by delivering Fe to the complex composed of the cysteine desulfurase SufS and the zinc-dependent sulfurtransferase SufU. Also plays a critical role in coproporphyrin-dependent heme b biogenesis and thus provides an essential function for the bacterial global metabolism. The sequence is that of Intracellular iron chaperone frataxin (fra) from Bacillus subtilis (strain 168).